A 363-amino-acid polypeptide reads, in one-letter code: UDP-N-acetylglucosamine--N-acetylmuramyl-(pentapeptide) pyrophosphoryl-undecaprenol N-acetylglucosamine transferase (363 aa).

UDP-N-acetyl-alpha-D-glucosamine contacts are provided by residues 14–16 (TGG), asparagine 122, arginine 163, serine 190, and glutamine 285.

Belongs to the glycosyltransferase 28 family. MurG subfamily.

Its subcellular location is the cell inner membrane. It carries out the reaction di-trans,octa-cis-undecaprenyl diphospho-N-acetyl-alpha-D-muramoyl-L-alanyl-D-glutamyl-meso-2,6-diaminopimeloyl-D-alanyl-D-alanine + UDP-N-acetyl-alpha-D-glucosamine = di-trans,octa-cis-undecaprenyl diphospho-[N-acetyl-alpha-D-glucosaminyl-(1-&gt;4)]-N-acetyl-alpha-D-muramoyl-L-alanyl-D-glutamyl-meso-2,6-diaminopimeloyl-D-alanyl-D-alanine + UDP + H(+). It functions in the pathway cell wall biogenesis; peptidoglycan biosynthesis. Functionally, cell wall formation. Catalyzes the transfer of a GlcNAc subunit on undecaprenyl-pyrophosphoryl-MurNAc-pentapeptide (lipid intermediate I) to form undecaprenyl-pyrophosphoryl-MurNAc-(pentapeptide)GlcNAc (lipid intermediate II). The sequence is that of UDP-N-acetylglucosamine--N-acetylmuramyl-(pentapeptide) pyrophosphoryl-undecaprenol N-acetylglucosamine transferase from Prochlorococcus marinus (strain MIT 9301).